The sequence spans 704 residues: Phytyl ester synthase 1, chloroplastic (704 aa).

Residues 1–27 (MATCSSSLLVLPNLRLSSNQRRNFKVR) constitute a chloroplast transit peptide.

The protein belongs to the diacylglycerol acyltransferase family. Interacts with PGM48. Mostly expressed in flowers (e.g. sepals, petals and stamen).

Its subcellular location is the plastid. It localises to the chloroplast. The protein localises to the plastoglobule. The enzyme catalyses a 1,2-diacyl-3-O-(beta-D-galactosyl)-sn-glycerol + a 1,2-diacylglycerol = an acyl-3-O-(beta-D-galactosyl)-sn-glycerol + a triacylglycerol. The catalysed reaction is a 1,2-diacylglycerol + a fatty acyl-CoA = a triacylglycerol + CoA. It carries out the reaction a fatty acyl-[ACP] + a 1,2-diacylglycerol = a triacylglycerol + holo-[ACP]. It catalyses the reaction phytol + a fatty acyl-CoA = a fatty acid phytyl ester + CoA. The enzyme catalyses phytol + tetradecanoyl-CoA = tetradecanoate phytyl ester + CoA. The catalysed reaction is a 1,3-diacylglycerol + a fatty acyl-CoA = a triacylglycerol + CoA. It carries out the reaction 1,2-dihexanoylglycerol + tetradecanoyl-CoA = 1,2-dihexanoyl-3-tetradecanoylglycerol + CoA. It catalyses the reaction 1,2-dihexanoylglycerol + hexadecanoyl-CoA = 1,2-dihexanoyl-3-hexadecanoylglycerol + CoA. The enzyme catalyses 1,2-dihexanoylglycerol + octadecanoyl-CoA = 1,2-dihexanoyl-3-octadecanoylglycerol + CoA. The catalysed reaction is (7Z,10Z,13Z)-hexadecatrienoyl-CoA + 1,2-dihexanoylglycerol = 1,2-dihexanoyl-3-(7Z,10Z,13Z-hexadecatrienoyl)-glycerol + CoA. It carries out the reaction 1,2-dihexanoylglycerol + (9Z)-octadecenoyl-CoA = 1,2-dihexanoyl-3-(9Z-octadecenoyl)-glycerol + CoA. It catalyses the reaction 1,2-dihexanoylglycerol + (9Z,12Z,15Z)-octadecatrienoyl-CoA = 1,2-dihexanoyl-3-(9Z,12Z,15Z-octadecatrienoyl)-glycerol + CoA. The enzyme catalyses phytol + decanoyl-CoA = decanoate phytyl ester + CoA. The catalysed reaction is (7Z,10Z,13Z)-hexadecatrienoyl-CoA + phytol = (7Z,10Z,13Z)-hexadecatrienoate phytyl ester + CoA. It carries out the reaction phytol + dodecanoyl-CoA = dodecanoate phytyl ester + CoA. In terms of biological role, acyltransferase involved in fatty acid phytyl ester synthesis in chloroplasts, a process required for the maintenance of the photosynthetic membrane integrity during abiotic stress and senescence. Exhibits phytyl ester synthesis and diacylglycerol acyltransferase activities with broad substrate specificities, and can employ acyl-CoAs, acyl carrier proteins, and galactolipids as acyl donors. The chain is Phytyl ester synthase 1, chloroplastic from Arabidopsis thaliana (Mouse-ear cress).